A 337-amino-acid chain; its full sequence is MLHSASVIFLSLSVLAAVGVWGPFVRDGGFDAMDAVVARHPSTGIPGLQHYPEFDRGLMSIVAFNLSAVNSIAYCFMMQFLANVAVIPVILCTEDSSAAPGSWVRYSTIWGLLSQLGTSAVIYPLYAMSFIRQSSREPSQTRQPMSDMALILNMAMGYALPAAITLNVLHSSLNMQIWGILAFTVYPICMKLMARIIKVFTGFRKFPTRSRHQSIPTLRYAVAGGVALQGHLWYLGTELGIFKGHTPSLSAEKMDSEGGARLVLRFLQVDYAITFLAMLLLAWHELIYHRILPAWRALGGLIIGWILVGPGATLAAAWYLRSRFIMAPGKRKKRYGD.

Residues 5–25 (ASVIFLSLSVLAAVGVWGPFV) form a helical membrane-spanning segment. A glycan (N-linked (GlcNAc...) asparagine) is linked at Asn65. Transmembrane regions (helical) follow at residues 72 to 92 (IAYC…VILC), 111 to 131 (GLLS…MSFI), 149 to 169 (ALIL…LNVL), 177 to 197 (IWGI…ARII), 222 to 242 (VAGG…LGIF), 267 to 287 (LQVD…HELI), and 298 to 318 (LGGL…AAAW).

Belongs to the membrane-bound ascI terpene cyclase family.

The protein resides in the membrane. The protein operates within antifungal biosynthesis. In terms of biological role, cyclase; part of the gene cluster that mediates the biosynthesis of the tetrahydropyranyl antifungal agent lanomycin that acts as an inhibitor of CYP51 and blocks the ergosterol biosynthesis. The biosynthesis probably begins with the formation of an hexaketide, followed by methionine mediated alkylation of C-2 and C-6, and methylation of the reduced C-3 oxygen, pyran forming reductive ring closure, oxygenation of C-4, beta-keto reduction, enoyl reduction and dehydration of the remaining oxygens, and finally, acylation with glycine to complete the biosynthesis. This chain is Terpene cyclase, found in Pyrenophora dematioidea (Helminthosporium dematioideum).